The chain runs to 252 residues: Small ribosomal subunit protein uS3 (252 aa).

The 73-residue stretch at Ile-39–Lys-111 folds into the KH type-2 domain. The interval Lys-222–Asn-252 is disordered. A compositionally biased stretch (polar residues) spans Gly-241 to Asn-252.

It belongs to the universal ribosomal protein uS3 family. As to quaternary structure, part of the 30S ribosomal subunit. Forms a tight complex with proteins S10 and S14.

In terms of biological role, binds the lower part of the 30S subunit head. Binds mRNA in the 70S ribosome, positioning it for translation. In Onion yellows phytoplasma (strain OY-M), this protein is Small ribosomal subunit protein uS3.